A 331-amino-acid chain; its full sequence is tRNA N6-adenosine threonylcarbamoyltransferase (331 aa).

Histidine 109, histidine 113, and tyrosine 130 together coordinate Fe cation. Residues 130–134, aspartate 162, aspartate 183, and serine 262 each bind substrate; that span reads YLSGG. Position 290 (aspartate 290) interacts with Fe cation.

This sequence belongs to the KAE1 / TsaD family. The cofactor is Fe(2+).

The protein resides in the cytoplasm. It carries out the reaction L-threonylcarbamoyladenylate + adenosine(37) in tRNA = N(6)-L-threonylcarbamoyladenosine(37) in tRNA + AMP + H(+). Its function is as follows. Required for the formation of a threonylcarbamoyl group on adenosine at position 37 (t(6)A37) in tRNAs that read codons beginning with adenine. Is probably involved in the transfer of the threonylcarbamoyl moiety of threonylcarbamoyl-AMP (TC-AMP) to the N6 group of A37. This is tRNA N6-adenosine threonylcarbamoyltransferase from Saccharolobus islandicus (strain Y.G.57.14 / Yellowstone #1) (Sulfolobus islandicus).